A 245-amino-acid chain; its full sequence is Suppressor of aph-1 (245 aa).

The GYF domain occupies 12–60 (DTKWHYLGPDSEKYGPYMSKDMLFWLQAGYFNDGLQLKTENEPNYHTLG). The tract at residues 126–166 (NQNGPPMGAQMHSQPPSEPIDAGSLSHTPDSENETRLNEQT) is disordered.

In terms of biological role, involved in negative regulation of early and late embryonic Notch signaling. The sequence is that of Suppressor of aph-1 from Caenorhabditis elegans.